The following is a 1141-amino-acid chain: Envelopment polyprotein (1141 aa).

The N-terminal stretch at 1 to 18 (MGRLYLIVLGVLITATAG) is a signal peptide. Over 19-483 (FPRSVHELKI…HSLAVELCVP (465 aa)) the chain is Lumenal. 10 disulfides stabilise this stretch: Cys-30/Cys-158, Cys-64/Cys-164, Cys-113/Cys-135, Cys-140/Cys-145, Cys-182/Cys-192, Cys-217/Cys-253, Cys-242/Cys-357, Cys-382/Cys-441, Cys-386/Cys-395, and Cys-458/Cys-481. N-linked (GlcNAc...) asparagine; by host glycosylation is present at Asn-141. Asn-353 is a glycosylation site (N-linked (GlcNAc...) asparagine; by host). N-linked (GlcNAc...) asparagine; by host glycosylation is present at Asn-405. The helical transmembrane segment at 484-506 (GIHGWATIALVITFCFGWLLIPT) threads the bilayer. Residues 507-633 (TTMVVLKCLR…LGVFRYKSRC (127 aa)) are Cytoplasmic-facing. Residues 522-539 (CSHYSTESKFKVILEKVK) are binding to the ribonucleoprotein. 2 CCHC-type zinc fingers span residues 551-571 (CDIC…KKSC) and 576-597 (CPYC…YAVC). Binding to the ribonucleoprotein stretches follow at residues 594–611 (YAVC…KKSL), 598–609 (KLTGRFHEALKK), and 617–631 (QRGC…RYKS). An ITAM domain is found at 617-640 (QRGCYRTLGVFRYKSRCYVGLVWM). Residues Tyr-621 and Tyr-634 each carry the phosphotyrosine modification. The short motif at 621 to 624 (YRTL) is the YxxL element. The helical transmembrane segment at 634 to 654 (YVGLVWMCLLTLELIVWAASA) threads the bilayer. Residues 655–1110 (DTPLLEPGWS…EWLLGILNGN (456 aa)) lie on the Lumenal side of the membrane. Cystine bridges form between Cys-741–Cys-776, Cys-745–Cys-783, Cys-757–Cys-890, Cys-771–Cys-901, Cys-786–Cys-909, Cys-812–Cys-821, Cys-829–Cys-838, and Cys-869–Cys-873. Residues 763–783 (YQYETSWSCNPPDCPGVGTGC) are fusion loop. Asn-933 is a glycosylation site (N-linked (GlcNAc...) asparagine; by host). 5 cysteine pairs are disulfide-bonded: Cys-975/Cys-1005, Cys-998/Cys-1050, Cys-1015/Cys-1020, Cys-1051/Cys-1056, and Cys-1090/Cys-1094. The helical transmembrane segment at 1111 to 1131 (WVVVAVLVIILLISIFLFSFF) threads the bilayer. The interval 1127-1141 (LFSFFCPIRSHKKQL) is binding to the ribonucleoprotein. Over 1132-1141 (CPIRSHKKQL) the chain is Cytoplasmic.

Belongs to the hantavirus envelope glycoprotein family. As to quaternary structure, homodimer. Homotetramer; forms heterotetrameric Gn-Gc spikes in the pre-fusion conformation. Interacts (via C-terminus) with the nucleoprotein. Interacts with host TUFM; this interaction contributes to the virus-induced degradation of mitochondria by autophagy, which leads to degradation of host MAVS and inhibition of type I interferon (IFN) responses. Interacts with host MAP1LC3B; this interaction contributes to the virus-induced degradation of mitochondria by autophagy, which leads to degradation of host MAVS and inhibition of type I interferon (IFN) responses. Homodimer. Homotetramer; forms heterotetrameric Gn-Gc spikes in the pre-fusion conformation. Homotrimer; forms homotrimer in the post-fusion conformation at acidic pH. Interacts (via C-terminus) with the nucleoprotein. Envelope polyprotein precursor is quickly cleaved in vivo just after synthesis, presumably by host signal peptidase.

It localises to the virion membrane. Its subcellular location is the host cell surface. The protein resides in the host Golgi apparatus membrane. It is found in the host endoplasmic reticulum membrane. The protein localises to the host mitochondrion. Functionally, forms homotetramers with glycoprotein C at the surface of the virion. Attaches the virion to host cell receptors including integrin ITGAV/ITGB3. This attachment induces virion internalization predominantly through clathrin-dependent endocytosis. Mediates the assembly and budding of infectious virus particles through its interaction with the nucleocapsid protein and the viral genome. May dysregulate normal immune and endothelial cell responses through an ITAM motif. Translocates to mitochondria, binds to host TUFM and recruits MAP1LC3B. These interactions induce mitochondrial autophagy and therefore destruction of host MAVS leading to inhibition of type I interferon (IFN) responses. Concomitant breakdown of glycoprotein N is apparently prevented by the nucleoprotein that may inhibit Gn-stimulated autophagosome-lysosome fusion. Interacts with the viral genomic RNA. Its function is as follows. Forms homotetramers with glycoprotein N at the surface of the virion. Attaches the virion to host cell receptors including integrin ITGAV/ITGB3. This attachment induces virion internalization predominantly through clathrin-dependent endocytosis. Class II fusion protein that promotes fusion of viral membrane with host endosomal membrane after endocytosis of the virion. This chain is Envelopment polyprotein (GP), found in Homo sapiens (Human).